A 478-amino-acid chain; its full sequence is Phosphoglycerate kinase 2, chloroplastic (478 aa).

The N-terminal 74 residues, 1–74, are a transit peptide targeting the chloroplast; that stretch reads MASTAATAAL…GKGARGVITM (74 aa). S78 is modified (phosphoserine). Residues A96, D97, N99, R113, T135, H136, G138, R139, R194, H226, and R227 each contribute to the (2R)-3-phosphoglycerate site. Position 272 (G272) interacts with ADP. G272 is a binding site for CDP. Residues K274 and K278 each contribute to the AMP site. An ATP-binding site is contributed by K278. An ADP-binding site is contributed by G296. CDP is bound at residue G296. The AMP site is built by G297 and G369. ATP-binding residues include G297 and G369. 2 residues coordinate CDP: G394 and F399. F399 provides a ligand contact to ADP. E400 provides a ligand contact to AMP. Residues E400, D431, and S432 each coordinate ATP. D431 is a binding site for Mg(2+).

The protein belongs to the phosphoglycerate kinase family. Monomer. Mg(2+) serves as cofactor.

The protein localises to the plastid. The protein resides in the chloroplast. It catalyses the reaction (2R)-3-phosphoglycerate + ATP = (2R)-3-phospho-glyceroyl phosphate + ADP. The protein operates within carbohydrate biosynthesis; Calvin cycle. This chain is Phosphoglycerate kinase 2, chloroplastic, found in Arabidopsis thaliana (Mouse-ear cress).